We begin with the raw amino-acid sequence, 170 residues long: Putative apoptosis inhibitor ORF87 (170 aa).

2 BIR repeats span residues arginine 22–lysine 92 and arginine 104–serine 169.

Functionally, may act as an apoptosis inhibitor. This chain is Putative apoptosis inhibitor ORF87, found in Ostreid herpesvirus 1 (isolate France) (OsHV-1).